We begin with the raw amino-acid sequence, 356 residues long: DNA polymerase IV (356 aa).

One can recognise a UmuC domain in the interval Met-1–Gly-188. Residues Asp-11 and Asp-106 each contribute to the Mg(2+) site. The active site involves Glu-107.

The protein belongs to the DNA polymerase type-Y family. As to quaternary structure, monomer. Mg(2+) serves as cofactor.

Its subcellular location is the cytoplasm. The enzyme catalyses DNA(n) + a 2'-deoxyribonucleoside 5'-triphosphate = DNA(n+1) + diphosphate. Functionally, poorly processive, error-prone DNA polymerase involved in untargeted mutagenesis. Copies undamaged DNA at stalled replication forks, which arise in vivo from mismatched or misaligned primer ends. These misaligned primers can be extended by PolIV. Exhibits no 3'-5' exonuclease (proofreading) activity. May be involved in translesional synthesis, in conjunction with the beta clamp from PolIII. The protein is DNA polymerase IV of Listeria innocua serovar 6a (strain ATCC BAA-680 / CLIP 11262).